Here is a 205-residue protein sequence, read N- to C-terminus: Putative STAG3-like protein 1 (205 aa).

The 86-residue stretch at 10–95 (PKVTCRDVLP…GRFKDWMVSM (86 aa)) folds into the SCD domain.

This sequence belongs to the SCC3 family.

It is found in the nucleus. The protein is Putative STAG3-like protein 1 (STAG3L1) of Homo sapiens (Human).